A 101-amino-acid polypeptide reads, in one-letter code: Small ribosomal subunit protein uS14 (101 aa).

This sequence belongs to the universal ribosomal protein uS14 family. In terms of assembly, part of the 30S ribosomal subunit. Contacts proteins S3 and S10.

In terms of biological role, binds 16S rRNA, required for the assembly of 30S particles and may also be responsible for determining the conformation of the 16S rRNA at the A site. In Dechloromonas aromatica (strain RCB), this protein is Small ribosomal subunit protein uS14.